The primary structure comprises 868 residues: Translation initiation factor IF-2 (868 aa).

2 disordered regions span residues 49-72 and 92-276; these read LSKQ…TSTL and KRSD…EHLK. The segment covering 92-240 has biased composition (basic and acidic residues); sequence KRSDIEEQQR…KKAEAEEVHL (149 aa). The 170-residue stretch at 368–537 folds into the tr-type G domain; the sequence is SRAPVVTIMG…VLQSELLDLQ (170 aa). A G1 region spans residues 377–384; the sequence is GHVDHGKT. Residue 377–384 coordinates GTP; that stretch reads GHVDHGKT. The interval 402–406 is G2; sequence GITQH. The segment at 423–426 is G3; sequence DTPG. Residues 423–427 and 477–480 contribute to the GTP site; these read DTPGH and NKMD. Residues 477–480 are G4; it reads NKMD. Residues 513–515 form a G5 region; it reads SAK.

Belongs to the TRAFAC class translation factor GTPase superfamily. Classic translation factor GTPase family. IF-2 subfamily.

Its subcellular location is the cytoplasm. One of the essential components for the initiation of protein synthesis. Protects formylmethionyl-tRNA from spontaneous hydrolysis and promotes its binding to the 30S ribosomal subunits. Also involved in the hydrolysis of GTP during the formation of the 70S ribosomal complex. This chain is Translation initiation factor IF-2, found in Alteromonas mediterranea (strain DSM 17117 / CIP 110805 / LMG 28347 / Deep ecotype).